Consider the following 305-residue polypeptide: Aurora/IPL1-related protein kinase 2 (305 aa).

Residues 30–280 (FEIGRPLGKG…LEQVKEHYWI (251 aa)) enclose the Protein kinase domain. Residues 36–44 (LGKGKFGSV) and lysine 59 each bind ATP. Catalysis depends on aspartate 153, which acts as the Proton acceptor.

It belongs to the protein kinase superfamily. Ser/Thr protein kinase family. Aurora subfamily. As to quaternary structure, component of the CPC complex which consists of icp-1; csc-1; bir-1 and air-2. Within the complex, interacts with icp-1; csc-1 and bir-1. Interacts with zen-4. Interacts with tlk-1 and bmk-1. Post-translationally, phosphorylated. Increased phosphorylation upon chromatin obstructions at anaphase.

It is found in the cytoplasm. The protein localises to the cytoskeleton. It localises to the chromosome. The protein resides in the midbody. Its subcellular location is the spindle. It catalyses the reaction L-seryl-[protein] + ATP = O-phospho-L-seryl-[protein] + ADP + H(+). It carries out the reaction L-threonyl-[protein] + ATP = O-phospho-L-threonyl-[protein] + ADP + H(+). Functionally, serine/threonine-protein kinase component of the chromosomal passenger complex (CPC), a complex that acts as a key regulator of chromosome segregation and cytokinesis. The CPC complex has essential functions at the centromere in ensuring correct chromosome alignment and segregation. Required for histone H3 phosphorylation during segregation of homologous chromosomes in meiosis and mitosis. Required for histone H3 'Ser-10' phosphorylation. Phosphorylates tlk-1 at 'Ser-634', which enhances its activity. Phosphorylates zen-4 at 'Ser-680'. Required for the recruitment of bub-1 to the ring-shaped domain between chromosomes during meiotic anaphase I. Also required for the localization of the condensin I complex subunit smc-4 to mitotic chromosomes. Acts at the spindle midzone and the midbody to prevent cleavage furrow regression upon chromatin obstructions during cytokinesis. This Caenorhabditis elegans protein is Aurora/IPL1-related protein kinase 2.